The chain runs to 145 residues: uncharacterized protein (145 aa).

Residues 95–119 (YVDSTSRTPSAKKDMQGLSVSEKQT) form a disordered region.

This is an uncharacterized protein from Treponema pallidum (strain Nichols).